A 475-amino-acid polypeptide reads, in one-letter code: Cytochrome c-552 (475 aa).

Positions 1–29 are cleaved as a signal peptide; sequence MSIKHWMSAPIAVATLFASQLLLAGSVLA. The segment at 38–57 is disordered; the sequence is PRNDAFEQKHPDQYHSWKAT. H92 contacts heme c. Heme is bound by residues C120, C123, and K124. C158, C161, H162, C207, C210, and H211 together coordinate heme c. Ca(2+) contacts are provided by E213, Y214, K259, and Q261. A substrate-binding site is contributed by Y214. H262 serves as a coordination point for substrate. Heme c is bound by residues H273, C280, C283, H284, H299, C312, C315, H316, and H391.

The protein belongs to the cytochrome c-552 family. Requires Ca(2+) as cofactor. Heme c serves as cofactor.

Its subcellular location is the periplasm. It catalyses the reaction 6 Fe(III)-[cytochrome c] + NH4(+) + 2 H2O = 6 Fe(II)-[cytochrome c] + nitrite + 8 H(+). It participates in nitrogen metabolism; nitrate reduction (assimilation). Its function is as follows. Catalyzes the reduction of nitrite to ammonia, consuming six electrons in the process. The chain is Cytochrome c-552 from Vibrio parahaemolyticus serotype O3:K6 (strain RIMD 2210633).